The primary structure comprises 246 residues: Ribonuclease PH (246 aa).

Residues Arg-91 and 129–131 contribute to the phosphate site; that span reads GTR.

The protein belongs to the RNase PH family. As to quaternary structure, homohexameric ring arranged as a trimer of dimers.

The enzyme catalyses tRNA(n+1) + phosphate = tRNA(n) + a ribonucleoside 5'-diphosphate. Phosphorolytic 3'-5' exoribonuclease that plays an important role in tRNA 3'-end maturation. Removes nucleotide residues following the 3'-CCA terminus of tRNAs; can also add nucleotides to the ends of RNA molecules by using nucleoside diphosphates as substrates, but this may not be physiologically important. Probably plays a role in initiation of 16S rRNA degradation (leading to ribosome degradation) during starvation. In Paraburkholderia xenovorans (strain LB400), this protein is Ribonuclease PH.